The sequence spans 308 residues: Peroxisomal targeting signal 2 receptor (308 aa).

6 WD repeats span residues 57 to 88 (DVED…RLFD), 101 to 132 (EHKA…KLWL), 145 to 176 (GSNS…KFWD), 187 to 218 (EIPN…YCYD), 231 to 262 (GHQL…RIFD), and 274 to 306 (LHSE…YIWN).

Belongs to the WD repeat peroxin-7 family. In terms of assembly, interacts with PEX21.

Its subcellular location is the cytoplasm. The protein resides in the cytosol. It is found in the peroxisome matrix. Receptor required for the peroxisomal import of proteins containing a C-terminal PTS2-type peroxisomal targeting signal, such as 3-oxoacyl-CoA thiolase. Specifically binds to cargo proteins containing a PTS2 peroxisomal targeting signal in the cytosol. Cargo protein-binding triggers interaction with PEX21 and formation of a ternary complex composed of PEX21 and PEX7 along with PTS2-containing cargo proteins, which is tranlocated into peroxisomes by passing through the PEX13-PEX14 docking complex. The polypeptide is Peroxisomal targeting signal 2 receptor (pex7) (Schizosaccharomyces pombe (strain 972 / ATCC 24843) (Fission yeast)).